The following is a 163-amino-acid chain: Endoribonuclease YbeY (163 aa).

Zn(2+) contacts are provided by His121, His125, and His131.

Belongs to the endoribonuclease YbeY family. Zn(2+) is required as a cofactor.

It is found in the cytoplasm. Its function is as follows. Single strand-specific metallo-endoribonuclease involved in late-stage 70S ribosome quality control and in maturation of the 3' terminus of the 16S rRNA. The chain is Endoribonuclease YbeY from Synechococcus sp. (strain JA-3-3Ab) (Cyanobacteria bacterium Yellowstone A-Prime).